The chain runs to 250 residues: Kv channel-interacting protein 4 (250 aa).

Positions 2-44 are KIS; the sequence is NVRRVESISAQLEEASSTGGFLYTQNSTKRSIKERLMKLLPCS. Phosphoserine occurs at positions 17 and 56. The EF-hand 1; degenerate domain occupies 61-117; the sequence is LEMATVRHRPEALELLEAQSKFTKKELQILYRGFKNECPSGVVNEDTFKEIYSQFFP. EF-hand domains lie at 120-155, 156-191, and 204-239; these read DSTT…LLRG, TVQE…IYDM, and APRQ…DENI. Residues Asp-133, Asp-135, Asn-137, Asp-144, Asp-169, Asn-171, Asp-173, Tyr-175, Glu-180, Asp-217, Asn-219, Asp-221, and Glu-228 each contribute to the Ca(2+) site. The interaction with KCND2 stretch occupies residues 237–250; it reads ENIMRSMQLFENVI.

This sequence belongs to the recoverin family. Component of heteromultimeric potassium channels. Identified in potassium channel complexes containing KCND1, KCND2, KCND3, KCNIP1, KCNIP2, KCNIP3, KCNIP4, DPP6 and DPP10. Interacts with KCND2. Interacts with KCND3. Interacts with the C-terminus of PSEN2 and probably PSEN1.

The protein localises to the cell membrane. Its subcellular location is the cytoplasm. It is found in the peroxisome. In terms of biological role, regulatory subunit of Kv4/D (Shal)-type voltage-gated rapidly inactivating A-type potassium channels. Modulates KCND2 channel density, inactivation kinetics and rate of recovery from inactivation in a calcium-dependent and isoform-specific manner. Modulates KCND3/Kv4.3 currents. Isoform 4 does not increase KCND2 expression at the cell membrane. Isoform 4 retains KCND3 in the endoplasmic reticulum and negatively regulates its expression at the cell membrane. The chain is Kv channel-interacting protein 4 (KCNIP4) from Bos taurus (Bovine).